The chain runs to 103 residues: Large ribosomal subunit protein bL21 (103 aa).

Belongs to the bacterial ribosomal protein bL21 family. As to quaternary structure, part of the 50S ribosomal subunit. Contacts protein L20.

Functionally, this protein binds to 23S rRNA in the presence of protein L20. This is Large ribosomal subunit protein bL21 from Vibrio cholerae serotype O1 (strain ATCC 39541 / Classical Ogawa 395 / O395).